Reading from the N-terminus, the 264-residue chain is Octanoyltransferase (264 aa).

Positions 74–262 (GTASELVWLV…AFESVFGPRQ (189 aa)) constitute a BPL/LPL catalytic domain. Substrate contacts are provided by residues 113–120 (RGGEYTYH), 193–195 (AIG), and 206–208 (GIA). Cys224 functions as the Acyl-thioester intermediate in the catalytic mechanism.

This sequence belongs to the LipB family.

Its subcellular location is the cytoplasm. The enzyme catalyses octanoyl-[ACP] + L-lysyl-[protein] = N(6)-octanoyl-L-lysyl-[protein] + holo-[ACP] + H(+). Its pathway is protein modification; protein lipoylation via endogenous pathway; protein N(6)-(lipoyl)lysine from octanoyl-[acyl-carrier-protein]: step 1/2. Functionally, catalyzes the transfer of endogenously produced octanoic acid from octanoyl-acyl-carrier-protein onto the lipoyl domains of lipoate-dependent enzymes. Lipoyl-ACP can also act as a substrate although octanoyl-ACP is likely to be the physiological substrate. The polypeptide is Octanoyltransferase (Brucella melitensis biotype 1 (strain ATCC 23456 / CCUG 17765 / NCTC 10094 / 16M)).